Reading from the N-terminus, the 63-residue chain is Large ribosomal subunit protein bL28 (63 aa).

It belongs to the bacterial ribosomal protein bL28 family.

The chain is Large ribosomal subunit protein bL28 from Coprothermobacter proteolyticus (strain ATCC 35245 / DSM 5265 / OCM 4 / BT).